Here is a 42-residue protein sequence, read N- to C-terminus: Photosystem II reaction center protein J (42 aa).

Residues 10–30 (IPLWLVGTVAGILVLGLVGLF) form a helical membrane-spanning segment.

The protein belongs to the PsbJ family. As to quaternary structure, PSII is composed of 1 copy each of membrane proteins PsbA, PsbB, PsbC, PsbD, PsbE, PsbF, PsbH, PsbI, PsbJ, PsbK, PsbL, PsbM, PsbT, PsbX, PsbY, PsbZ, Psb30/Ycf12, at least 3 peripheral proteins of the oxygen-evolving complex and a large number of cofactors. It forms dimeric complexes.

It localises to the plastid. The protein localises to the chloroplast thylakoid membrane. One of the components of the core complex of photosystem II (PSII). PSII is a light-driven water:plastoquinone oxidoreductase that uses light energy to abstract electrons from H(2)O, generating O(2) and a proton gradient subsequently used for ATP formation. It consists of a core antenna complex that captures photons, and an electron transfer chain that converts photonic excitation into a charge separation. This is Photosystem II reaction center protein J from Staurastrum punctulatum (Green alga).